Reading from the N-terminus, the 465-residue chain is Beta-1,2-xylosyltransferase XYXT1 (465 aa).

Topologically, residues 1–11 (MKAAVRSKKSK) are cytoplasmic. The helical; Signal-anchor for type II membrane protein transmembrane segment at 12–32 (GSFCHPPLLLLIVAIQFLVIY) threads the bilayer. At 33–465 (SPTLDQYMVM…VLLKALHLLR (433 aa)) the chain is on the lumenal side. N-linked (GlcNAc...) asparagine glycosylation is found at N80, N118, N125, N266, and N403.

This sequence belongs to the glycosyltransferase 61 family. In terms of tissue distribution, widely expressed.

Its subcellular location is the golgi apparatus membrane. It participates in glycan metabolism. Its function is as follows. Glycosyltransferase involved in the xylosylation of xylan, the major hemicellulose (non-cellulosic component) of primary and secondary walls of angiosperms. Possesses beta-1,2-xylosyltransferase activity, transferring xylose from UDP-xylose to the xylan backbone. Catalyzes the addition of 2-O-xylosyl side chains to the xylan backbone. This is Beta-1,2-xylosyltransferase XYXT1 from Oryza sativa subsp. japonica (Rice).